A 481-amino-acid chain; its full sequence is UDP-N-acetylmuramoyl-L-alanyl-D-glutamate--L-lysine ligase (481 aa).

Ser42 lines the UDP-N-acetyl-alpha-D-muramoyl-L-alanyl-D-glutamate pocket. An ATP-binding site is contributed by 118–124 (GTKGKTT). Residues 160 to 161 (TT), Ser187, and Arg195 each bind UDP-N-acetyl-alpha-D-muramoyl-L-alanyl-D-glutamate. Residue Lys229 is modified to N6-carboxylysine. Positions 404-407 (DDPN) match the L-lysine recognition motif motif.

This sequence belongs to the MurCDEF family. MurE subfamily. In terms of processing, carboxylation is probably crucial for Mg(2+) binding and, consequently, for the gamma-phosphate positioning of ATP.

The protein resides in the cytoplasm. It carries out the reaction UDP-N-acetyl-alpha-D-muramoyl-L-alanyl-D-glutamate + L-lysine + ATP = UDP-N-acetyl-alpha-D-muramoyl-L-alanyl-gamma-D-glutamyl-L-lysine + ADP + phosphate + H(+). It participates in cell wall biogenesis; peptidoglycan biosynthesis. In terms of biological role, catalyzes the addition of L-lysine to the nucleotide precursor UDP-N-acetylmuramoyl-L-alanyl-D-glutamate (UMAG) in the biosynthesis of bacterial cell-wall peptidoglycan. In Streptococcus sanguinis (strain SK36), this protein is UDP-N-acetylmuramoyl-L-alanyl-D-glutamate--L-lysine ligase.